The sequence spans 265 residues: Palmitoyltransferase ZDHHC21 (265 aa).

Topologically, residues 1-16 (MGLRIHFVVDPHGWCC) are cytoplasmic. The chain crosses the membrane as a helical span at residues 17-37 (MGLIVFVWLYNIVIIPKIVLF). The Extracellular segment spans residues 38-44 (PHYEEGH). A helical membrane pass occupies residues 45–65 (IPGILIIIFYGISIFCLVALV). Topologically, residues 66-133 (RASLTDPGRL…NNCVGEDNHW (68 aa)) are cytoplasmic. Residues 90–140 (ELCNKCNLMRPKRSHHCSRCGHCVRRMDHHCPWINNCVGEDNHWLFLQLCF) form the DHHC domain. Cys120 serves as the catalytic S-palmitoyl cysteine intermediate. Residues 134-154 (LFLQLCFYTELLTCYALMFSF) form a helical membrane-spanning segment. At 155–185 (CHYYYFLPLKKRNLDLFVVRHELAIMRLAAF) the chain is on the extracellular side. The helical transmembrane segment at 186–206 (MGITMLVGITGLFYTQLIGII) threads the bilayer. Residues 207-265 (TDTTSIEKMSNCCEEISRPRKPWQQTFSEVFGTRWKILWFIPFRQRQPLRVPYHFANHV) lie on the Cytoplasmic side of the membrane.

Belongs to the DHHC palmitoyltransferase family. Widely expressed. Expressed in Henle's layer within the hair bulb and the hair shaft cuticle (at protein level). Expression is limited to the post-mitotic lineages of inner root sheath (IRS) and cuticle.

It localises to the golgi apparatus membrane. The protein localises to the golgi apparatus. The protein resides in the cis-Golgi network membrane. It is found in the cell membrane. The enzyme catalyses L-cysteinyl-[protein] + hexadecanoyl-CoA = S-hexadecanoyl-L-cysteinyl-[protein] + CoA. Palmitoyltransferase that catalyzes the addition of palmitate onto various protein substrates. Palmitoylates sex steroid hormone receptors, including ESR1, PGR and AR, thereby regulating their targeting to the plasma membrane. This affects rapid intracellular signaling by sex hormones via ERK and AKT kinases and the generation of cAMP, but does not affect that mediated by their nuclear receptor. Palmitoylates FYN, regulates its localization in hair follicles and plays a key role in epidermal homeostasis and hair follicle differentiation. Through the palmitoylation of PLCB1 and the regulation of PLCB1 downstream signaling may indirectly regulate the function of the endothelial barrier and the adhesion of leukocytes to the endothelium. Also has a palmitoyltransferase activity toward ADRA1D, positively regulating its activity and expression and may thereby play a role in vascular contraction. May also palmitoylate eNOS and LCK. This Mus musculus (Mouse) protein is Palmitoyltransferase ZDHHC21.